Reading from the N-terminus, the 241-residue chain is Agamous-like MADS-box protein AGL9 homolog (241 aa).

An MADS-box domain is found at 3–57; sequence RGRVELKRIENKINRQVTFAKRRNGLLKKAYELSVLCDAEVALIIFSNRGKLYEF. In terms of domain architecture, K-box spans 89–179; that stretch reads EISSQQEYLK…KQRLMEGSTL (91 aa).

The protein resides in the nucleus. In terms of biological role, probable transcription factor. This is Agamous-like MADS-box protein AGL9 homolog (FBP2) from Petunia hybrida (Petunia).